The chain runs to 311 residues: 4-diphosphocytidyl-2-C-methyl-D-erythritol kinase (311 aa).

Lys-16 is an active-site residue. 100 to 110 (PIGAGLAGGSS) provides a ligand contact to ATP. The active site involves Asp-142.

This sequence belongs to the GHMP kinase family. IspE subfamily.

The enzyme catalyses 4-CDP-2-C-methyl-D-erythritol + ATP = 4-CDP-2-C-methyl-D-erythritol 2-phosphate + ADP + H(+). Its pathway is isoprenoid biosynthesis; isopentenyl diphosphate biosynthesis via DXP pathway; isopentenyl diphosphate from 1-deoxy-D-xylulose 5-phosphate: step 3/6. Its function is as follows. Catalyzes the phosphorylation of the position 2 hydroxy group of 4-diphosphocytidyl-2C-methyl-D-erythritol. This chain is 4-diphosphocytidyl-2-C-methyl-D-erythritol kinase, found in Prochlorococcus marinus (strain MIT 9312).